A 251-amino-acid polypeptide reads, in one-letter code: SPbeta prophage-derived putative antirepressor protein YoqD (251 aa).

The polypeptide is SPbeta prophage-derived putative antirepressor protein YoqD (yoqD) (Bacillus subtilis (strain 168)).